We begin with the raw amino-acid sequence, 150 residues long: MGVQPPNFSWVLPGRLAGLALPRLPAHYQFLLDLGVRHLVSLTERGPPHSDSCPGLTLHRLRIPDFCPPAPDQIDRFVQIVDEANARGEAVGVHCALGFGRTGTMLACYLVKERGLAAGDAIAEIRRLRPGSIETYEQEKAVFQFYQRTK.

Positions 7-150 (NFSWVLPGRL…AVFQFYQRTK (144 aa)) constitute a Tyrosine-protein phosphatase domain. The active-site Phosphocysteine intermediate is Cys-95.

Belongs to the protein-tyrosine phosphatase family. Non-receptor class dual specificity subfamily. Widely expressed. Highly expressed in spleen, prostate, colon, adrenal gland, mammary gland, thyroid and trachea. Expressed at lower level in uterus, small intestine, bladder, bone marrow, brain, spinal cord and stomach.

The protein localises to the cytoplasm. The protein resides in the cytosol. It localises to the nucleus. The enzyme catalyses O-phospho-L-tyrosyl-[protein] + H2O = L-tyrosyl-[protein] + phosphate. It catalyses the reaction O-phospho-L-seryl-[protein] + H2O = L-seryl-[protein] + phosphate. The catalysed reaction is O-phospho-L-threonyl-[protein] + H2O = L-threonyl-[protein] + phosphate. Protein phosphatase that mediates dephosphorylation of proteins phosphorylated on Tyr and Ser/Thr residues. In vitro, it can dephosphorylate p44-ERK1 (MAPK3) but not p54 SAPK-beta (MAPK10) in vitro. Able to enhance activation of JNK and p38 (MAPK14). This Homo sapiens (Human) protein is Dual specificity protein phosphatase 23 (DUSP23).